Consider the following 520-residue polypeptide: Glucose-1-phosphate adenylyltransferase small subunit, chloroplastic (520 aa).

A chloroplast-targeting transit peptide spans 1–71 (MATMAAIGSL…RTPSIVSPKA (71 aa)). The disordered stretch occupies residues 1 to 81 (MATMAAIGSL…VSDSQNSQTC (81 aa)). The segment covering 14–27 (SSSSNHTRRLSSSS) has biased composition (low complexity). The span at 28-51 (QRKTLSFSSSSLTGEKLNPTQEII) shows a compositional bias: polar residues.

Belongs to the bacterial/plant glucose-1-phosphate adenylyltransferase family. As to quaternary structure, heterotetramer. As to expression, leaves.

The protein resides in the plastid. It localises to the chloroplast. It carries out the reaction alpha-D-glucose 1-phosphate + ATP + H(+) = ADP-alpha-D-glucose + diphosphate. Its pathway is glycan biosynthesis; starch biosynthesis. Activated by 3'phosphoglycerate, inhibited by orthophosphate. Allosteric regulation. Functionally, this protein plays a role in synthesis of starch. It catalyzes the synthesis of the activated glycosyl donor, ADP-glucose from Glc-1-P and ATP. The polypeptide is Glucose-1-phosphate adenylyltransferase small subunit, chloroplastic (AGPS1) (Brassica napus (Rape)).